The chain runs to 199 residues: NADH-quinone oxidoreductase subunit C (199 aa).

This sequence belongs to the complex I 30 kDa subunit family. NDH-1 is composed of 14 different subunits. Subunits NuoB, C, D, E, F, and G constitute the peripheral sector of the complex.

It is found in the cell inner membrane. The enzyme catalyses a quinone + NADH + 5 H(+)(in) = a quinol + NAD(+) + 4 H(+)(out). In terms of biological role, NDH-1 shuttles electrons from NADH, via FMN and iron-sulfur (Fe-S) centers, to quinones in the respiratory chain. The immediate electron acceptor for the enzyme in this species is believed to be ubiquinone. Couples the redox reaction to proton translocation (for every two electrons transferred, four hydrogen ions are translocated across the cytoplasmic membrane), and thus conserves the redox energy in a proton gradient. The protein is NADH-quinone oxidoreductase subunit C of Roseobacter denitrificans (strain ATCC 33942 / OCh 114) (Erythrobacter sp. (strain OCh 114)).